The primary structure comprises 289 residues: Protein shisa-2 homolog (289 aa).

Positions Met-1–Ala-27 are cleaved as a signal peptide. At Ser-28–Ser-104 the chain is on the extracellular side. The interval Gly-81–Asp-102 is disordered. A helical membrane pass occupies residues Ala-105 to Leu-125. At Gly-126–Val-289 the chain is on the cytoplasmic side. Residues Pro-162–Thr-198 form a disordered region. Residues Ser-163–Ala-191 are compositionally biased toward low complexity.

This sequence belongs to the shisa family.

The protein resides in the endoplasmic reticulum membrane. In terms of biological role, plays an essential role in the maturation of presomitic mesoderm cells by individual attenuation of both FGF and WNT signaling. The chain is Protein shisa-2 homolog (SHISA2) from Bos taurus (Bovine).